The sequence spans 737 residues: Palmitoyltransferase AKR1 (737 aa).

The segment at 1 to 47 is disordered; that stretch reads MKQIDSEDSITVPNDTPEDNSASSMQPVMSNLSIEEHQSENEPIEQE. Residues 1 to 304 are Cytoplasmic-facing; that stretch reads MKQIDSEDSI…VYFKKSLHTK (304 aa). Residues 9-33 show a composition bias toward polar residues; that stretch reads SITVPNDTPEDNSASSMQPVMSNLS. ANK repeat units follow at residues 54 to 84, 90 to 119, 124 to 153, 157 to 190, 194 to 223, and 227 to 256; these read PLLS…DLKH, ERVS…DVNF, LNAT…DPSV, QGFN…DIDC, NGRT…SVKA, and GGFT…DFFQ. Helical transmembrane passes span 305–325 and 326–346; these read LVTF…FASI and HPIF…YTLK. Topologically, residues 347-364 are cytoplasmic; that stretch reads KYVIPAYAQRNTRQSFLK. A helical membrane pass occupies residues 365 to 385; it reads TPFLAGVFSGSVFWASYTWLT. The Lumenal portion of the chain corresponds to 386–396; sequence RIMPLTLIEEP. A helical transmembrane segment spans residues 397 to 417; sequence ITNLLFFAGVVLLASLFVKLV. Over 418-493 the chain is Cytoplasmic; the sequence is RSDPGLIPEE…YNDIGLRNHK (76 aa). Residues 450-500 enclose the DHHC domain; that stretch reads HFCISTWVRKPIRSKFSNFSRALVTRFDHFCPWIYNDIGLRNHKTFLFFIL. Cys-480 functions as the S-palmitoyl cysteine intermediate in the catalytic mechanism. The helical transmembrane segment at 494–514 threads the bilayer; that stretch reads TFLFFILCLETCIFVFLKLCM. At 515-547 the chain is on the lumenal side; it reads EYFDVLEDTFEDDYDLNCGIFGEDLCAGFFFDT. Residues 548–568 form a helical membrane-spanning segment; that stretch reads FTFLVLAWTCFQGIWVGFLTF. Residues 569-737 lie on the Cytoplasmic side of the membrane; that stretch reads VQLFQTAKGV…ERHYLAEEIV (169 aa).

Belongs to the DHHC palmitoyltransferase family. AKR/ZDHHC17 subfamily.

The protein resides in the early endosome membrane. The protein localises to the golgi apparatus membrane. It catalyses the reaction L-cysteinyl-[protein] + hexadecanoyl-CoA = S-hexadecanoyl-L-cysteinyl-[protein] + CoA. Functionally, palmitoyltransferase specific for casein kinase 1. This is Palmitoyltransferase AKR1 (AKR1) from Lachancea kluyveri (strain ATCC 58438 / CBS 3082 / BCRC 21498 / NBRC 1685 / JCM 7257 / NCYC 543 / NRRL Y-12651) (Yeast).